A 93-amino-acid chain; its full sequence is UPF0213 protein CPE1444 (93 aa).

Positions 1-75 (MNYVYILKCK…KKLTRNQKLQ (75 aa)) constitute a GIY-YIG domain.

The protein belongs to the UPF0213 family.

This is UPF0213 protein CPE1444 from Clostridium perfringens (strain 13 / Type A).